The chain runs to 301 residues: Probable actin-related protein 2/3 complex subunit 2 (301 aa).

It belongs to the ARPC2 family. Component of the Arp2/3 complex, at least composed of arx-1, arx-2, arx-4 and arx-6.

The protein localises to the cytoplasm. The protein resides in the cytoskeleton. Its function is as follows. Functions as actin-binding component of the Arp2/3 complex which is involved in regulation of actin polymerization and together with an activating nucleation-promoting factor (NPF) mediates the formation of branched actin networks. Seems to contact the mother actin filament. Plays a role in time-dependent memory loss and the retention of conditioned behavior over time. The protein is Probable actin-related protein 2/3 complex subunit 2 of Caenorhabditis elegans.